Reading from the N-terminus, the 527-residue chain is Splicing factor MUD2 (527 aa).

The disordered stretch occupies residues 36 to 169; the sequence is DNAVIDTHFK…SKFNGDRDKR (134 aa). The segment covering 42–55 has biased composition (basic and acidic residues); the sequence is THFKRQKSDGELPK. Phosphoserine is present on Ser-49. Over residues 60–85 the composition is skewed to polar residues; that stretch reads RNVSHSNNRGPSSIITMSTNRTTYEQ. Basic and acidic residues predominate over residues 94–109; the sequence is SYRDASGRSYNRENRY. Over residues 110–122 the composition is skewed to polar residues; that stretch reads SSHNTGPQWNNNP. Basic and acidic residues-rich tracts occupy residues 125 to 141 and 155 to 169; these read RQRDERRGRNERFDRRG and RKNEGSKFNGDRDKR. An RRM domain is found at 424 to 511; sequence LLLLNCLDPL…QFNDRTVLCT (88 aa).

As to quaternary structure, MSL5, MUD2 and PRP40 interact to form the commitment complex 2 (CC2), a precursor of mature spliceosomes.

Functionally, splicing factor that contacts pre-mRNA directly and is a component of the pre-mRNA-U1 snRNP complex (commitment complex 2) that forms during early spliceosome assembly in yeast extracts. This chain is Splicing factor MUD2 (MUD2), found in Saccharomyces cerevisiae (strain ATCC 204508 / S288c) (Baker's yeast).